Consider the following 345-residue polypeptide: Phosphoribosylformylglycinamidine cyclo-ligase (345 aa).

The protein belongs to the AIR synthase family.

It localises to the cytoplasm. The catalysed reaction is 2-formamido-N(1)-(5-O-phospho-beta-D-ribosyl)acetamidine + ATP = 5-amino-1-(5-phospho-beta-D-ribosyl)imidazole + ADP + phosphate + H(+). Its pathway is purine metabolism; IMP biosynthesis via de novo pathway; 5-amino-1-(5-phospho-D-ribosyl)imidazole from N(2)-formyl-N(1)-(5-phospho-D-ribosyl)glycinamide: step 2/2. The chain is Phosphoribosylformylglycinamidine cyclo-ligase from Escherichia fergusonii (strain ATCC 35469 / DSM 13698 / CCUG 18766 / IAM 14443 / JCM 21226 / LMG 7866 / NBRC 102419 / NCTC 12128 / CDC 0568-73).